A 211-amino-acid polypeptide reads, in one-letter code: Large ribosomal subunit protein uL4 (211 aa).

The span at 41 to 52 shows a compositional bias: polar residues; that stretch reads QTNARQGTASTK. Residues 41–78 form a disordered region; that stretch reads QTNARQGTASTKTRAEVRGGGRKPWRQKGTGRARAGSI. The segment covering 60-71 has biased composition (basic residues); sequence GGRKPWRQKGTG.

The protein belongs to the universal ribosomal protein uL4 family. In terms of assembly, part of the 50S ribosomal subunit.

One of the primary rRNA binding proteins, this protein initially binds near the 5'-end of the 23S rRNA. It is important during the early stages of 50S assembly. It makes multiple contacts with different domains of the 23S rRNA in the assembled 50S subunit and ribosome. In terms of biological role, forms part of the polypeptide exit tunnel. The chain is Large ribosomal subunit protein uL4 from Rippkaea orientalis (strain PCC 8801 / RF-1) (Cyanothece sp. (strain PCC 8801)).